A 264-amino-acid polypeptide reads, in one-letter code: Phosphonoacetaldehyde hydrolase (264 aa).

Catalysis depends on aspartate 9, which acts as the Nucleophile. Mg(2+)-binding residues include aspartate 9 and alanine 11. Residue lysine 50 is the Schiff-base intermediate with substrate of the active site. Aspartate 183 provides a ligand contact to Mg(2+).

The protein belongs to the HAD-like hydrolase superfamily. PhnX family. As to quaternary structure, homodimer. The cofactor is Mg(2+).

The enzyme catalyses phosphonoacetaldehyde + H2O = acetaldehyde + phosphate + H(+). Involved in phosphonate degradation. This chain is Phosphonoacetaldehyde hydrolase, found in Bacillus cytotoxicus (strain DSM 22905 / CIP 110041 / 391-98 / NVH 391-98).